The chain runs to 215 residues: E3 ubiquitin-protein ligase NleG (215 aa).

The tract at residues 136-189 (CPITLCIPETGVFVRNAKNSEICSLYDHNALTELIRRNAPHPLSREPFVPEMIV) is RING/U-box domain. The short motif at 213-215 (TRI) is the PDZ-binding motif element.

It belongs to the NleG E3 ligase family. As to quaternary structure, interacts with host GOPC (human protein). Post-translationally, two sizes of protein are detected upon expression in C.rodentium; only the smaller protein is secreted.

It is found in the secreted. The protein resides in the host cytoplasm. It catalyses the reaction S-ubiquitinyl-[E2 ubiquitin-conjugating enzyme]-L-cysteine + [acceptor protein]-L-lysine = [E2 ubiquitin-conjugating enzyme]-L-cysteine + N(6)-ubiquitinyl-[acceptor protein]-L-lysine.. Functionally, effector proteins function to alter host cell physiology and promote bacterial survival in host tissues. This protein is an E3 ubiquitin-protein ligase that probably interferes with the host's ubiquitination pathway and targets host proteins for proteasomal degradation. Can ubiquitinate ubiquitin, giving rise to polyubiquitin chains (in vitro). Does not complement an nleG8 deletion in C.rodentium. The polypeptide is E3 ubiquitin-protein ligase NleG (Escherichia coli O157:H7).